The following is a 109-amino-acid chain: Nucleoid-associated protein swp_1717 (109 aa).

A disordered region spans residues 88–109; the sequence is QKDKMAEVTGGMQLPPGMKMPF.

Belongs to the YbaB/EbfC family. In terms of assembly, homodimer.

Its subcellular location is the cytoplasm. It localises to the nucleoid. Its function is as follows. Binds to DNA and alters its conformation. May be involved in regulation of gene expression, nucleoid organization and DNA protection. The protein is Nucleoid-associated protein swp_1717 of Shewanella piezotolerans (strain WP3 / JCM 13877).